The primary structure comprises 187 residues: tRNA (cytidine(56)-2'-O)-methyltransferase (187 aa).

Residues Leu-94 and Gly-120–Val-124 contribute to the S-adenosyl-L-methionine site.

This sequence belongs to the aTrm56 family. In terms of assembly, homodimer.

It is found in the cytoplasm. It catalyses the reaction cytidine(56) in tRNA + S-adenosyl-L-methionine = 2'-O-methylcytidine(56) in tRNA + S-adenosyl-L-homocysteine + H(+). In terms of biological role, specifically catalyzes the AdoMet-dependent 2'-O-ribose methylation of cytidine at position 56 in tRNAs. The protein is tRNA (cytidine(56)-2'-O)-methyltransferase of Hyperthermus butylicus (strain DSM 5456 / JCM 9403 / PLM1-5).